Here is a 499-residue protein sequence, read N- to C-terminus: Alpha-L-arabinofuranosidase B (499 aa).

The signal sequence occupies residues 1–17 (MFSRRNLLALGLAATVS). Residues 18–335 (AGPCDIYEAG…ENIVAAKYVV (318 aa)) are catalytic. Intrachain disulfides connect cysteine 21/cysteine 31, cysteine 81/cysteine 86, and cysteine 176/cysteine 177. Residue asparagine 83 is glycosylated (N-linked (GlcNAc...) asparagine). An N-linked (GlcNAc...) asparagine glycan is attached at asparagine 202. Substrate is bound at residue aspartate 219. Catalysis depends on glutamate 221, which acts as the Nucleophile. Residues asparagine 222, asparagine 223, and glycine 296 each contribute to the substrate site. The active-site Proton donor is aspartate 297. Residues 336 to 499 (GSLVSGPSFT…SFEIETAFAS (164 aa)) are ABD. A disulfide bridge links cysteine 401 with cysteine 439. Residues histidine 416, asparagine 418, phenylalanine 419, aspartate 435, histidine 463, glutamate 465, leucine 468, and aspartate 488 each coordinate substrate.

This sequence belongs to the glycosyl hydrolase 54 family.

The protein resides in the secreted. It catalyses the reaction Hydrolysis of terminal non-reducing alpha-L-arabinofuranoside residues in alpha-L-arabinosides.. Its pathway is glycan metabolism; L-arabinan degradation. Functionally, alpha-L-arabinofuranosidase involved in the degradation of arabinoxylan, a major component of plant hemicellulose. Able to hydrolyze 1,5-, 1,3- and 1,2-alpha-linkages not only in L-arabinofuranosyl oligosaccharides, but also in polysaccharides containing terminal non-reducing L-arabinofuranoses in side chains, like L-arabinan, arabinogalactan and arabinoxylan. The chain is Alpha-L-arabinofuranosidase B (abfB) from Aspergillus kawachii (strain NBRC 4308) (White koji mold).